We begin with the raw amino-acid sequence, 57 residues long: DNA gyrase inhibitor YacG (57 aa).

Positions 10, 13, 25, and 29 each coordinate Zn(2+).

This sequence belongs to the DNA gyrase inhibitor YacG family. As to quaternary structure, interacts with GyrB. Zn(2+) is required as a cofactor.

Inhibits all the catalytic activities of DNA gyrase by preventing its interaction with DNA. Acts by binding directly to the C-terminal domain of GyrB, which probably disrupts DNA binding by the gyrase. The sequence is that of DNA gyrase inhibitor YacG from Brucella melitensis biotype 1 (strain ATCC 23456 / CCUG 17765 / NCTC 10094 / 16M).